The primary structure comprises 975 residues: Translation initiation factor IF-2 (975 aa).

Positions 48–63 (DHLRKSHGATDGDKRK) are enriched in basic and acidic residues. Disordered regions lie at residues 48-84 (DHLR…GKAR) and 96-388 (FVKR…QAPT). The span at 104–115 (ETGADQAQAQTD) shows a compositional bias: low complexity. The span at 120 to 177 (AELKRREEEARREAELLEKQAQELRERQERLEREEAERRAREEAAEAERRRAEEEAAA) shows a compositional bias: basic and acidic residues. A compositionally biased stretch (low complexity) spans 178–211 (KRAAAAQAEAAQQAAAAREQAQRAQSEPAEQSAQ). Positions 212–263 (DEARAAAERAAQREAAKKAEDAAREAADKARAEQEEIRKRREAAEAEARAIR) are enriched in basic and acidic residues. The span at 302-330 (KPAGEAAAARPAAKKPASGAPAPAAAPAG) shows a compositional bias: low complexity. The segment covering 359–372 (SSGGVDRGWRGGPK) has biased composition (gly residues). In terms of domain architecture, tr-type G spans 475 to 644 (PRPPVVTVMG…LLQAEVLELK (170 aa)). The tract at residues 484-491 (GHVDHGKT) is G1. 484–491 (GHVDHGKT) lines the GTP pocket. Residues 509–513 (GITQH) are G2. Residues 530–533 (DTPG) are G3. GTP contacts are provided by residues 530 to 534 (DTPGH) and 584 to 587 (NKID). The tract at residues 584 to 587 (NKID) is G4. Residues 620–622 (SAK) are G5.

It belongs to the TRAFAC class translation factor GTPase superfamily. Classic translation factor GTPase family. IF-2 subfamily.

The protein resides in the cytoplasm. Functionally, one of the essential components for the initiation of protein synthesis. Protects formylmethionyl-tRNA from spontaneous hydrolysis and promotes its binding to the 30S ribosomal subunits. Also involved in the hydrolysis of GTP during the formation of the 70S ribosomal complex. This chain is Translation initiation factor IF-2, found in Burkholderia pseudomallei (strain 1710b).